Reading from the N-terminus, the 273-residue chain is GSCRMSQRGAPSTSPIIPSLSPSSGGNPSPRSSQRIDSVRVPARLPGGSDHPEYGLPLSPRSLRPYLSRGPGAFCAPPWRPDVNRLAGDVNRLFRGISTSSIHVTEDSRVLRRVLLDFYAMGYTHARPTLECWQALLQLMPEQSLPLRATLRAINSEDKYEQRFLDPPSKPPKTLFGEECEVSGDESPSEEEEASGNSTISEFSPEEESASSDFESFSDEEDDSCCTGKWSSSESDSEADVPTNPPTTRARAAQKRRGRPVPKGGRPAKSARR.

Disordered regions lie at residues 1-57 (GSCR…YGLP) and 160-273 (YEQR…SARR). Positions 11-33 (PSTSPIIPSLSPSSGGNPSPRSS) are enriched in low complexity. Composition is skewed to acidic residues over residues 178–194 (EECEVSGDESPSEEEEA) and 204–224 (SPEEESASSDFESFSDEEDDS). Residues 261 to 273 (VPKGGRPAKSARR) show a composition bias toward low complexity.

It belongs to the herpesviridae ICP22 family.

The polypeptide is Transcriptional regulator ICP22 homolog (Equus caballus (Horse)).